The following is a 331-amino-acid chain: Cytosolic Fe-S cluster assembly factor CFD1 (331 aa).

25–32 serves as a coordination point for ATP; sequence GKGGVGKS. The [4Fe-4S] cluster site is built by Cys211 and Cys214.

It belongs to the Mrp/NBP35 ATP-binding proteins family. NUBP2/CFD1 subfamily. Heterotetramer of 2 NBP35 and 2 CFD1 chains. The cofactor is [4Fe-4S] cluster.

The protein localises to the cytoplasm. Functionally, component of the cytosolic iron-sulfur (Fe/S) protein assembly (CIA) machinery. Required for maturation of extramitochondrial Fe-S proteins. The NBP35-CFD1 heterotetramer forms a Fe-S scaffold complex, mediating the de novo assembly of an Fe-S cluster and its transfer to target apoproteins. This Cryptococcus neoformans var. neoformans serotype D (strain B-3501A) (Filobasidiella neoformans) protein is Cytosolic Fe-S cluster assembly factor CFD1.